Reading from the N-terminus, the 118-residue chain is Putative pterin-4-alpha-carbinolamine dehydratase (118 aa).

This sequence belongs to the pterin-4-alpha-carbinolamine dehydratase family.

It carries out the reaction (4aS,6R)-4a-hydroxy-L-erythro-5,6,7,8-tetrahydrobiopterin = (6R)-L-erythro-6,7-dihydrobiopterin + H2O. The chain is Putative pterin-4-alpha-carbinolamine dehydratase from Xanthomonas oryzae pv. oryzae (strain MAFF 311018).